We begin with the raw amino-acid sequence, 117 residues long: Immunoglobulin kappa variable 9-129 (117 aa).

An N-terminal signal peptide occupies residues 1 to 22; the sequence is MDMRAPAQVFGFLLLWFPGARC. The interval 23-45 is framework-1; sequence DIQMTQSPSSLSASLGERVSLTC. C45 and C110 are joined by a disulfide. The complementarity-determining-1 stretch occupies residues 46 to 56; the sequence is RASQDIHGYLN. Residues 57–71 form a framework-2 region; that stretch reads LFQQKPGETIKHLIY. The tract at residues 72–78 is complementarity-determining-2; the sequence is ETSNLDS. Positions 79–110 are framework-3; the sequence is GVPKRFSGSRSGSDYSLIIGSLESEDFADYYC. The tract at residues 111-117 is complementarity-determining-3; the sequence is LQYASSP.

The sequence is that of Immunoglobulin kappa variable 9-129 from Mus musculus (Mouse).